Reading from the N-terminus, the 249-residue chain is Segregation and condensation protein A (249 aa).

This sequence belongs to the ScpA family. In terms of assembly, component of a cohesin-like complex composed of ScpA, ScpB and the Smc homodimer, in which ScpA and ScpB bind to the head domain of Smc. The presence of the three proteins is required for the association of the complex with DNA.

The protein localises to the cytoplasm. In terms of biological role, participates in chromosomal partition during cell division. May act via the formation of a condensin-like complex containing Smc and ScpB that pull DNA away from mid-cell into both cell halves. In Listeria monocytogenes serotype 4a (strain HCC23), this protein is Segregation and condensation protein A.